The sequence spans 359 residues: GTP cyclohydrolase FolE2 (359 aa).

This sequence belongs to the GTP cyclohydrolase IV family.

It catalyses the reaction GTP + H2O = 7,8-dihydroneopterin 3'-triphosphate + formate + H(+). It participates in cofactor biosynthesis; 7,8-dihydroneopterin triphosphate biosynthesis; 7,8-dihydroneopterin triphosphate from GTP: step 1/1. In terms of biological role, converts GTP to 7,8-dihydroneopterin triphosphate. This Cereibacter sphaeroides (strain ATCC 17025 / ATH 2.4.3) (Rhodobacter sphaeroides) protein is GTP cyclohydrolase FolE2.